Reading from the N-terminus, the 207-residue chain is Killer cell lectin-like receptor subfamily F member 2 (207 aa).

Topologically, residues 1-30 are cytoplasmic; the sequence is MENEDGYMTLSFKNRCKSKQKSKDFSLYPQ. The residue at position 7 (tyrosine 7) is a Phosphotyrosine. A helical; Signal-anchor for type II membrane protein transmembrane segment spans residues 31–51; the sequence is YYCLLLIFGCIVILIFIMTGI. Over 52 to 207 the chain is Extracellular; it reads DLKFWHKKMD…ILTHNGTSGV (156 aa). N-linked (GlcNAc...) asparagine glycosylation is present at asparagine 67. Disulfide bonds link cysteine 78-cysteine 89, cysteine 106-cysteine 193, and cysteine 172-cysteine 185. The 110-residue stretch at 85–194 folds into the C-type lectin domain; it reads NEGKCYWFST…CSSTFKGICQ (110 aa). The N-linked (GlcNAc...) asparagine glycan is linked to asparagine 202.

As to quaternary structure, homodimer; non-disulfide-linked. Interacts with CLEC2A. N-glycosylated.

The protein localises to the cell membrane. Its function is as follows. C-type lectin-like receptor involved in natural killer cell mediated cytotoxicity and cytokine secretion in keratinocytes via its interaction with CLEC2A. Triggers degranulation in a SYK-dependent manner and stimulates SYK phosphotyrosinylation without recruiting SYK directly. This chain is Killer cell lectin-like receptor subfamily F member 2 (KLRF2), found in Homo sapiens (Human).